Here is a 282-residue protein sequence, read N- to C-terminus: tRNA (guanine-N(7)-)-methyltransferase (282 aa).

Residues 1-29 (MPHAPAKRQKREEYKNALHEDESNAALPK) are disordered. Residues 10 to 22 (KREEYKNALHEDE) are compositionally biased toward basic and acidic residues. S-adenosyl-L-methionine is bound by residues Gly104, 153–154 (NT), and Cys173. Asp176 is a catalytic residue. Residue 255 to 257 (TEE) participates in S-adenosyl-L-methionine binding.

This sequence belongs to the class I-like SAM-binding methyltransferase superfamily. TrmB family. Forms a complex with TRM82.

The protein resides in the nucleus. The enzyme catalyses guanosine(46) in tRNA + S-adenosyl-L-methionine = N(7)-methylguanosine(46) in tRNA + S-adenosyl-L-homocysteine. The protein operates within tRNA modification; N(7)-methylguanine-tRNA biosynthesis. Catalyzes the formation of N(7)-methylguanine at position 46 (m7G46) in tRNA. In Phaeosphaeria nodorum (strain SN15 / ATCC MYA-4574 / FGSC 10173) (Glume blotch fungus), this protein is tRNA (guanine-N(7)-)-methyltransferase.